The primary structure comprises 628 residues: E3 SUMO-protein ligase PIAS3 (628 aa).

The tract at residues 1-200 (MAELGELKHM…QLRFCLCETS (200 aa)) is interaction with CCAR2. Positions 11-45 (VMSFRVSELQVLLGFAGRNKSGRKHELLAKALHLL) constitute an SAP domain. Residues 19–23 (LQVLL) carry the LXXLL motif motif. Residues Lys46, Lys56, Lys230, and Lys307 each participate in a glycyl lysine isopeptide (Lys-Gly) (interchain with G-Cter in SUMO2) cross-link. Residues 115 to 280 (MHPPLPQPVH…SLSVYLVRQL (166 aa)) enclose the PINIT domain. The segment at 312-393 (PDSEVATTSL…FMEILSSCSD (82 aa)) adopts an SP-RING-type zinc-finger fold. Zn(2+) contacts are provided by Cys343, His345, Cys366, and Cys369. The tract at residues 450–460 (LTIESSSDEED) is SUMO1-binding. Residues Lys466 and Lys482 each participate in a glycyl lysine isopeptide (Lys-Gly) (interchain with G-Cter in SUMO2) cross-link. Residues 597 to 617 (VAPGGALREGHGGPLPSGPSL) are disordered.

Belongs to the PIAS family. Monomer. Binds SUMO1 and UBE2I. Interacts with BCL11A, HMGA2, IRF1, MITF and NCOA2. Interacts with STAT5; the interaction occurs on stimulation by PRL. Interacts with GFI1; the interaction relieves the inhibitory effect of PIAS3 on STAT3-mediated transcriptional activity. Interacts with AR, PLAG1 and ZFHX3. Interacts with STAT3; the interaction occurs on stimulation by IL6, CNTF or OSM and inhibits the DNA binding activity of STAT3. Interacts with MTA1. Interacts with CCAR2 (via N-terminus). Interacts with TRIM8. Interacts with PRDM1/Blimp-1. Sumoylated. As to expression, widely expressed.

The protein resides in the cytoplasm. It localises to the nucleus. Its subcellular location is the nucleus speckle. The protein operates within protein modification; protein sumoylation. In terms of biological role, functions as an E3-type small ubiquitin-like modifier (SUMO) ligase, stabilizing the interaction between UBE2I and the substrate, and as a SUMO-tethering factor. Plays a crucial role as a transcriptional coregulation in various cellular pathways, including the STAT pathway and the steroid hormone signaling pathway. Involved in regulating STAT3 signaling via inhibiting STAT3 DNA-binding and suppressing cell growth. Enhances the sumoylation of MTA1 and may participate in its paralog-selective sumoylation. Sumoylates CCAR2 which promotes its interaction with SIRT1. Diminishes the sumoylation of ZFHX3 by preventing the colocalization of ZFHX3 with SUMO1 in the nucleus. The sequence is that of E3 SUMO-protein ligase PIAS3 (PIAS3) from Homo sapiens (Human).